The sequence spans 240 residues: Ribonuclease PH (240 aa).

Residues arginine 86 and 124–126 (GTR) contribute to the phosphate site.

This sequence belongs to the RNase PH family. As to quaternary structure, homohexameric ring arranged as a trimer of dimers.

The enzyme catalyses tRNA(n+1) + phosphate = tRNA(n) + a ribonucleoside 5'-diphosphate. Its function is as follows. Phosphorolytic 3'-5' exoribonuclease that plays an important role in tRNA 3'-end maturation. Removes nucleotide residues following the 3'-CCA terminus of tRNAs; can also add nucleotides to the ends of RNA molecules by using nucleoside diphosphates as substrates, but this may not be physiologically important. Probably plays a role in initiation of 16S rRNA degradation (leading to ribosome degradation) during starvation. This is Ribonuclease PH from Rhodospirillum rubrum (strain ATCC 11170 / ATH 1.1.1 / DSM 467 / LMG 4362 / NCIMB 8255 / S1).